Reading from the N-terminus, the 407-residue chain is 12S rRNA N(4)-cytidine methyltransferase METTL15 (407 aa).

S-adenosyl-L-methionine contacts are provided by residues 100–102 (GGH), Asp-119, Phe-146, Asp-169, and Gln-176. Ser-358 is subject to Phosphoserine.

The protein belongs to the methyltransferase superfamily. RsmH family.

Its subcellular location is the mitochondrion matrix. It carries out the reaction cytidine(839) in 12S rRNA + S-adenosyl-L-methionine = N(4)-methylcytidine(839) in 12S rRNA + S-adenosyl-L-homocysteine + H(+). Its function is as follows. N4-methylcytidine (m4C) methyltransferase responsible for the methylation of position C839 in mitochondrial 12S rRNA. Involved in the stabilization of 12S rRNA folding, therefore facilitating the assembly of the mitochondrial small ribosomal subunits. The protein is 12S rRNA N(4)-cytidine methyltransferase METTL15 of Homo sapiens (Human).